We begin with the raw amino-acid sequence, 99 residues long: A-type ATP synthase subunit F (99 aa).

Belongs to the V-ATPase F subunit family. In terms of assembly, has multiple subunits with at least A(3), B(3), C, D, E, F, H, I and proteolipid K(x).

The protein resides in the cell membrane. Its function is as follows. Component of the A-type ATP synthase that produces ATP from ADP in the presence of a proton gradient across the membrane. This chain is A-type ATP synthase subunit F, found in Methanococcus vannielii (strain ATCC 35089 / DSM 1224 / JCM 13029 / OCM 148 / SB).